We begin with the raw amino-acid sequence, 575 residues long: 5-aminolevulinate synthase, mitochondrial (575 aa).

Residues 1–55 (MESITRVSMSVCPFVKSSSAQALRQLSKNSALTSQARQCPFMGAALNAKESTRSY) constitute a mitochondrion transit peptide. 3 residues coordinate substrate: Arg124, Ser237, and Lys256. 3 residues coordinate pyridoxal 5'-phosphate: Ser289, His317, and Thr361. Residue Lys364 is part of the active site. Position 364 is an N6-(pyridoxal phosphate)lysine (Lys364). Pyridoxal 5'-phosphate is bound by residues Thr393 and Thr394. Thr479 contributes to the substrate binding site.

Belongs to the class-II pyridoxal-phosphate-dependent aminotransferase family. Homodimer. Pyridoxal 5'-phosphate serves as cofactor.

It is found in the mitochondrion matrix. The catalysed reaction is succinyl-CoA + glycine + H(+) = 5-aminolevulinate + CO2 + CoA. Its pathway is porphyrin-containing compound metabolism; protoporphyrin-IX biosynthesis; 5-aminolevulinate from glycine: step 1/1. Catalyzes the synthesis of 5-aminolevulinate (ALA) from succinyl-CoA and glycine, the first and rate-limiting step in heme biosynthesis. The protein is 5-aminolevulinate synthase, mitochondrial (HEM1) of Debaryomyces hansenii (strain ATCC 36239 / CBS 767 / BCRC 21394 / JCM 1990 / NBRC 0083 / IGC 2968) (Yeast).